The primary structure comprises 139 residues: Small ribosomal subunit protein uS12 (139 aa).

Asp102 carries the 3-methylthioaspartic acid modification.

It belongs to the universal ribosomal protein uS12 family. As to quaternary structure, part of the 30S ribosomal subunit. Contacts proteins S8 and S17. May interact with IF1 in the 30S initiation complex.

In terms of biological role, with S4 and S5 plays an important role in translational accuracy. Interacts with and stabilizes bases of the 16S rRNA that are involved in tRNA selection in the A site and with the mRNA backbone. Located at the interface of the 30S and 50S subunits, it traverses the body of the 30S subunit contacting proteins on the other side and probably holding the rRNA structure together. The combined cluster of proteins S8, S12 and S17 appears to hold together the shoulder and platform of the 30S subunit. The polypeptide is Small ribosomal subunit protein uS12 (Phytoplasma australiense).